We begin with the raw amino-acid sequence, 346 residues long: [LysW]-lysine/[LysW]-ornithine hydrolase (346 aa).

Position 68 (His-68) interacts with Zn(2+). The active site involves Asp-70. Residue Asp-92 coordinates Zn(2+). Glu-122 serves as the catalytic Proton acceptor. Zn(2+) contacts are provided by Glu-123, Glu-146, and His-317.

Belongs to the peptidase M20A family. LysK subfamily. Zn(2+) serves as cofactor. It depends on Co(2+) as a cofactor.

The protein resides in the cytoplasm. The enzyme catalyses [amino-group carrier protein]-C-terminal-gamma-(L-lysyl)-L-glutamate + H2O = [amino-group carrier protein]-C-terminal-L-glutamate + L-lysine. It carries out the reaction [amino-group carrier protein]-C-terminal-gamma-(L-ornithyl)-L-glutamate + H2O = [amino-group carrier protein]-C-terminal-L-glutamate + L-ornithine. It functions in the pathway amino-acid biosynthesis; L-lysine biosynthesis via AAA pathway; L-lysine from L-alpha-aminoadipate (Thermus route): step 5/5. Its pathway is amino-acid biosynthesis; L-arginine biosynthesis. Catalyzes the release of L-lysine from [LysW]-gamma-L-lysine and the release of L-ornithine from [LysW]-L-ornithine. The chain is [LysW]-lysine/[LysW]-ornithine hydrolase from Saccharolobus islandicus (strain M.16.27) (Sulfolobus islandicus).